The sequence spans 844 residues: 3',5'-cyclic-AMP phosphodiesterase 4A (844 aa).

A disordered region spans residues 1–124 (MEPPAAPSER…RSPLDSQASP (124 aa)). At Ser-13 the chain carries Phosphoserine. The segment covering 36–46 (QPRTPIRIQQR) has biased composition (low complexity). Residues 51 to 78 (SAERSEPERSPHRPIERADAVDTGDRPG) are compositionally biased toward basic and acidic residues. Residues 82-91 (TRMSWPSSFH) are compositionally biased toward polar residues. 5 positions are modified to phosphoserine: Ser-147, Ser-152, Ser-160, Ser-204, and Ser-333. The PDEase domain maps to 343–672 (VKTDQEDLLA…DWYHSAIRQS (330 aa)). A Glycyl lysine isopeptide (Lys-Gly) (interchain with G-Cter in SUMO) cross-link involves residue Lys-344. His-419 (proton donor) is an active-site residue. His-419 serves as a coordination point for 3',5'-cyclic AMP. AMP contacts are provided by His-419 and His-423. Positions 423, 459, 460, and 577 each coordinate Zn(2+). Residues Asp-460, Asp-577, Gln-628, and Phe-631 each contribute to the AMP site. Residue Asp-460 participates in Mg(2+) binding. A Mn(2+)-binding site is contributed by Asp-460. 3',5'-cyclic AMP-binding residues include Gln-628 and Phe-631. Phosphoserine occurs at positions 672 and 674. Residues 819-844 (ACSGTSGDNSAVISAPGRWGSGGDPA) are disordered. Positions 820-830 (CSGTSGDNSAV) are enriched in polar residues.

The protein belongs to the cyclic nucleotide phosphodiesterase family. PDE4 subfamily. As to quaternary structure, interacts with LYN (via SH3 domain). Interacts with ARRB2. It depends on Zn(2+) as a cofactor. Mg(2+) serves as cofactor. Requires Mn(2+) as cofactor. Post-translationally, proteolytically cleaved by CASP3.

Its subcellular location is the cytoplasm. It localises to the cytosol. The protein localises to the membrane. The enzyme catalyses 3',5'-cyclic AMP + H2O = AMP + H(+). It participates in purine metabolism; 3',5'-cyclic AMP degradation; AMP from 3',5'-cyclic AMP: step 1/1. Inhibited by rolipram and diazepam. Hydrolyzes the second messenger 3',5'-cyclic AMP (cAMP), which is a key regulator of many important physiological processes. Its function is as follows. Efficiently hydrolyzes cAMP. This is 3',5'-cyclic-AMP phosphodiesterase 4A (Pde4a) from Mus musculus (Mouse).